The sequence spans 277 residues: Protein OPG166 (277 aa).

N-linked (GlcNAc...) asparagine; by host glycans are attached at residues Asn-29 and Asn-58. 5 consecutive transmembrane segments (helical) span residues 124–144 (TMLM…EIAY), 156–176 (GILQ…AFLF), 186–206 (IIGL…KVFS), 219–239 (LIIY…GLSL), and 247–267 (LLLS…LFLV).

Belongs to the orthopoxvirus OPG166 protein family.

It localises to the host membrane. Its function is as follows. Promotes, when overexpressed, the influx of extracellular Ca(2+), leading to membrane permeability and host cell necrosis. This is Protein OPG166 (OPG166) from Variola virus (isolate Human/India/Ind3/1967) (VARV).